The following is a 654-amino-acid chain: Acetyl-coenzyme A synthetase (654 aa).

CoA-binding positions include 190–193 and threonine 313; that span reads RGGK. Residues 389-391, 413-418, aspartate 504, and arginine 519 each bind ATP; these read GEP and DTWWQT. Position 527 (serine 527) interacts with CoA. Arginine 530 is a binding site for ATP. 2 residues coordinate Mg(2+): valine 541 and valine 546. Lysine 613 carries the post-translational modification N6-acetyllysine.

The protein belongs to the ATP-dependent AMP-binding enzyme family. It depends on Mg(2+) as a cofactor. Acetylated. Deacetylation by the SIR2-homolog deacetylase activates the enzyme.

The enzyme catalyses acetate + ATP + CoA = acetyl-CoA + AMP + diphosphate. Catalyzes the conversion of acetate into acetyl-CoA (AcCoA), an essential intermediate at the junction of anabolic and catabolic pathways. AcsA undergoes a two-step reaction. In the first half reaction, AcsA combines acetate with ATP to form acetyl-adenylate (AcAMP) intermediate. In the second half reaction, it can then transfer the acetyl group from AcAMP to the sulfhydryl group of CoA, forming the product AcCoA. This is Acetyl-coenzyme A synthetase from Leptospira borgpetersenii serovar Hardjo-bovis (strain JB197).